A 343-amino-acid polypeptide reads, in one-letter code: Anthranilate phosphoribosyltransferase (343 aa).

5-phospho-alpha-D-ribose 1-diphosphate-binding positions include Gly86, 89–90 (GD), Thr94, 96–99 (NIST), 114–122 (KHGNRSASG), and Ser126. Gly86 is a binding site for anthranilate. Residue Ser98 coordinates Mg(2+). Asn117 contributes to the anthranilate binding site. Arg172 lines the anthranilate pocket. Residues Asp231 and Glu232 each coordinate Mg(2+).

The protein belongs to the anthranilate phosphoribosyltransferase family. In terms of assembly, homodimer. Requires Mg(2+) as cofactor.

It carries out the reaction N-(5-phospho-beta-D-ribosyl)anthranilate + diphosphate = 5-phospho-alpha-D-ribose 1-diphosphate + anthranilate. Its pathway is amino-acid biosynthesis; L-tryptophan biosynthesis; L-tryptophan from chorismate: step 2/5. In terms of biological role, catalyzes the transfer of the phosphoribosyl group of 5-phosphorylribose-1-pyrophosphate (PRPP) to anthranilate to yield N-(5'-phosphoribosyl)-anthranilate (PRA). The polypeptide is Anthranilate phosphoribosyltransferase (Synechococcus sp. (strain JA-2-3B'a(2-13)) (Cyanobacteria bacterium Yellowstone B-Prime)).